We begin with the raw amino-acid sequence, 391 residues long: Polyketide synthase 1 (391 aa).

Residue Cys164 is part of the active site.

The protein belongs to the thiolase-like superfamily. Chalcone/stilbene synthases family. In terms of assembly, homodimer. Expressed in fruits.

The enzyme catalyses (E)-4-coumaroyl-CoA + 3 malonyl-CoA + 3 H(+) = 2',4,4',6'-tetrahydroxychalcone + 3 CO2 + 4 CoA. It participates in secondary metabolite biosynthesis; flavonoid biosynthesis. Its function is as follows. Polyketide synthase producing naringenin chalcone and slightly p-coumaryltriacetic acid lactone (CTAL). Can use p-coumaryl-CoA as substrate. The polypeptide is Polyketide synthase 1 (PKS1) (Rubus idaeus (Raspberry)).